The sequence spans 778 residues: MEPTYSIPSTPLKTPIRITVNNGHNSGQHSLSLSTCKPTPEQNAFNLNMFSEKKKNQYQTPKCPSPPLKSTPASRVNSNLPLIHHISSLSMFSPTTSLSDFMNCENGGSNNIDFSSSFGSSSLNSNNTLSINNNNNNNNNNGGYKIPSSVNKNSNNYNSNSNSNSSNNVISLFDKNFDVVCKLGSGSFSDVFKVKSKFDGNSYAIKQARHQFRGFQERERAVREVKAAVSLPPHTNVLQYYSSWEQNNTLFIQTELCENGSLQDFLDSLSPDQILSEELIWNFLLDVCLGIQHIHSYNMLHLDIKPENLFISSQGNIKIGDFGMAVKLETTNNNNNGNGGCQSNNTSMDSDCNNLSLDEDDIFFDFLEGDSRYLAYEFLLDKKQISKPSDIFSIGVTFFEMVTGNEMPTNGPLWEQLRSDKAIDFLEPGKYSDSLYQVILDMMKSNITERISLDQILLNENIQLVQQKRLNQFQNIDNIENDNNNNNNTDNNNNNNTDNINNDNNDDNNNNINNYNLKLITPYFQYQKERKDEELKEIIEFGEIREIKEKFEHHQFAIPTPHFVRSNAGRSSSSSLFSDEEEDDDDDDDSGRDSPIHFSLNNLNNSSSNIGISESNSNNSFSSILEENNESSSSSPLPSLSFSRRLSTSSLVTTISPKPNFNTSGNKLFSNENNNSNNNNNNNNNNQNNNNNNGFYGFTNNGSCNNLNNLNNLNSSGEFSNSSKKKLGKRGLPLLDVVNGGGNSGSKVCAIKRSFDSHPQESDKMSPRNLLSLFQETN.

Residues 129-162 (LSINNNNNNNNNNGGYKIPSSVNKNSNNYNSNSN) form a disordered region. The region spanning 177-462 (FDVVCKLGSG…LDQILLNENI (286 aa)) is the Protein kinase domain. Residues 183–191 (LGSGSFSDV) and lysine 206 contribute to the ATP site. Aspartate 303 serves as the catalytic Proton acceptor. Asparagine 308 and aspartate 321 together coordinate Mg(2+). Disordered regions lie at residues 478–509 (NIEN…DDNN), 562–697 (HFVR…GFYG), and 757–778 (SHPQ…QETN). Over residues 578-590 (SDEEEDDDDDDDS) the composition is skewed to acidic residues. The span at 599–651 (SLNNLNNSSSNIGISESNSNNSFSSILEENNESSSSSPLPSLSFSRRLSTSSL) shows a compositional bias: low complexity. Residues 652-670 (VTTISPKPNFNTSGNKLFS) show a composition bias toward polar residues. The span at 671–693 (NENNNSNNNNNNNNNNQNNNNNN) shows a compositional bias: low complexity. Residues 757 to 766 (SHPQESDKMS) show a composition bias toward basic and acidic residues.

This sequence belongs to the protein kinase superfamily. Ser/Thr protein kinase family. WEE1 subfamily.

It catalyses the reaction L-seryl-[protein] + ATP = O-phospho-L-seryl-[protein] + ADP + H(+). The enzyme catalyses L-threonyl-[protein] + ATP = O-phospho-L-threonyl-[protein] + ADP + H(+). This chain is Probable protein kinase DDB_G0291133, found in Dictyostelium discoideum (Social amoeba).